A 196-amino-acid chain; its full sequence is MVKIGVLGLQGAVREHVKSVEASGAEAVVVKRIEQLEEIDGLILPGGESTTMRRLIDKYDFMEPLRTFAKSGKPMFGTCAGMILLAKTLIGYDEAHIGAMDITVERNAFGRQKDSFEAALSIKGVGEDFVGVFIRAPYVVDVADDVEVLSTHGDRMVAVKQGPFLAASFHPELTDDHRVTAYFVEMVKEAKMKKVV.

Position 47–49 (47–49) interacts with L-glutamine; that stretch reads GES. Catalysis depends on Cys-79, which acts as the Nucleophile. Residues Arg-106 and 134–135 each bind L-glutamine; that span reads IR. Residues His-170 and Glu-172 each act as charge relay system in the active site.

The protein belongs to the glutaminase PdxT/SNO family. As to quaternary structure, in the presence of PdxS, forms a dodecamer of heterodimers. Only shows activity in the heterodimer.

It catalyses the reaction aldehydo-D-ribose 5-phosphate + D-glyceraldehyde 3-phosphate + L-glutamine = pyridoxal 5'-phosphate + L-glutamate + phosphate + 3 H2O + H(+). The enzyme catalyses L-glutamine + H2O = L-glutamate + NH4(+). It participates in cofactor biosynthesis; pyridoxal 5'-phosphate biosynthesis. Functionally, catalyzes the hydrolysis of glutamine to glutamate and ammonia as part of the biosynthesis of pyridoxal 5'-phosphate. The resulting ammonia molecule is channeled to the active site of PdxS. This Bacillus anthracis (strain A0248) protein is Pyridoxal 5'-phosphate synthase subunit PdxT.